A 494-amino-acid polypeptide reads, in one-letter code: Alpha-amylase B (494 aa).

A signal peptide spans 1–18; that stretch reads MFLAKSIVCLALLAVANA. The residue at position 19 (Gln-19) is a Pyrrolidone carboxylic acid. Cys-46 and Cys-102 are oxidised to a cystine. Ca(2+) is bound by residues Asn-116, Arg-165, and Asp-174. Cysteines 153 and 167 form a disulfide. Arg-202 provides a ligand contact to chloride. Asp-204 acts as the Nucleophile in catalysis. Residue His-208 coordinates Ca(2+). Glu-241 (proton donor) is an active-site residue. Chloride-binding residues include Asn-304 and Arg-343. Intrachain disulfides connect Cys-376–Cys-382 and Cys-448–Cys-460.

The protein belongs to the glycosyl hydrolase 13 family. Monomer. Ca(2+) serves as cofactor. The cofactor is chloride.

It carries out the reaction Endohydrolysis of (1-&gt;4)-alpha-D-glucosidic linkages in polysaccharides containing three or more (1-&gt;4)-alpha-linked D-glucose units.. This Drosophila yakuba (Fruit fly) protein is Alpha-amylase B (Amy-d).